The sequence spans 423 residues: POU domain, class 5, transcription factor 1.3 (423 aa).

The segment at 85–211 is disordered; sequence GALSSGDPSP…GSGNEEDGTT (127 aa). Positions 94–110 are enriched in basic and acidic residues; it reads PEGRNEEDHGSISEERS. Composition is skewed to polar residues over residues 111–120, 156–173, and 194–203; these read SGTPSPNSPM, PQQSDCSPTASLESGASN, and PSPNNASFGS. Positions 207–281 constitute a POU-specific domain; sequence EDGTTLEEME…LLEQWLGEAE (75 aa). Residues 301-360 constitute a DNA-binding region (homeobox); it reads KRKMRTCFDSVLKGRLEGHFMCNQKPGARELAEIAKELGLEKDVVRVWFCNRRQKEKSKS.

This sequence belongs to the POU transcription factor family. Class-5 subfamily. As to quaternary structure, interacts with the transcription factors tcf7l1/tcf3 and vegt.

Its subcellular location is the nucleus. Transcription factor that binds to the octamer motif (5'-ATTTGCAT-3'). Antagonizes the activity of nodal/activin signaling during gastrulation to suppress mesendoderm formation. Acts maternally to inhibit vegt and beta-catenin-activated gene transcription, probably by forming a transcriptional repression complex on the promoters of target genes. Binds to an octamer motif in interspersed RNA. This is POU domain, class 5, transcription factor 1.3 (pou5f1.3) from Xenopus tropicalis (Western clawed frog).